Consider the following 409-residue polypeptide: uncharacterized protein (409 aa).

4 helical membrane passes run 20 to 40, 283 to 303, 344 to 364, and 372 to 392; these read ILTM…VSML, FALL…IGVM, IGGI…TVIF, and IPAV…FGLL.

The protein belongs to the ABC-4 integral membrane protein family.

It is found in the cell membrane. This is an uncharacterized protein from Bacillus subtilis (strain 168).